Consider the following 375-residue polypeptide: RNA exonuclease 4 (375 aa).

The interval 21–78 (KTLGSDASSSSASSSTNNRRKLSTSESTKPKRTRLDAKEKDAEGSKSCSPAPTSLPWF) is disordered. Over residues 25 to 35 (SDASSSSASSS) the composition is skewed to low complexity. Over residues 53-64 (TRLDAKEKDAEG) the composition is skewed to basic and acidic residues. The Exonuclease domain maps to 134 to 297 (NYLAIDCEMV…FRSQKPKWDE (164 aa)).

The protein belongs to the REXO4 family.

It is found in the nucleus. Its function is as follows. Exoribonuclease involved in ribosome biosynthesis. Involved in the processing of ITS1, the internal transcribed spacer localized between the 18S and 5.8S rRNAs. This chain is RNA exonuclease 4 (REX4), found in Mycosarcoma maydis (Corn smut fungus).